The primary structure comprises 77 residues: Translation initiation factor IF-1, chloroplastic (77 aa).

In terms of domain architecture, S1-like spans 1 to 71; sequence MKEQKLIHEG…TKGRIIYRLR (71 aa).

The protein belongs to the IF-1 family. As to quaternary structure, component of the 30S ribosomal translation pre-initiation complex which assembles on the 30S ribosome in the order IF-2 and IF-3, IF-1 and N-formylmethionyl-tRNA(fMet); mRNA recruitment can occur at any time during PIC assembly.

It localises to the plastid. It is found in the chloroplast. Functionally, one of the essential components for the initiation of protein synthesis. Stabilizes the binding of IF-2 and IF-3 on the 30S subunit to which N-formylmethionyl-tRNA(fMet) subsequently binds. Helps modulate mRNA selection, yielding the 30S pre-initiation complex (PIC). Upon addition of the 50S ribosomal subunit IF-1, IF-2 and IF-3 are released leaving the mature 70S translation initiation complex. This chain is Translation initiation factor IF-1, chloroplastic, found in Drimys granadensis.